The chain runs to 161 residues: MAKKNKKISLNTIAFNKKARHVYFIEQTLEAGLSLEGWEVKSLRDSKVQIKESYVILRSNEIFLYGAHISPLKSVSTHVNSDPIRTRKLLLNRLEINRIKEKINQKGATIVALKLYWIRGMVKLEIGLAKGKKSYDKRQDNKLRDWQRDKQRTLKQINYRL.

Belongs to the SmpB family.

It is found in the cytoplasm. Required for rescue of stalled ribosomes mediated by trans-translation. Binds to transfer-messenger RNA (tmRNA), required for stable association of tmRNA with ribosomes. tmRNA and SmpB together mimic tRNA shape, replacing the anticodon stem-loop with SmpB. tmRNA is encoded by the ssrA gene; the 2 termini fold to resemble tRNA(Ala) and it encodes a 'tag peptide', a short internal open reading frame. During trans-translation Ala-aminoacylated tmRNA acts like a tRNA, entering the A-site of stalled ribosomes, displacing the stalled mRNA. The ribosome then switches to translate the ORF on the tmRNA; the nascent peptide is terminated with the 'tag peptide' encoded by the tmRNA and targeted for degradation. The ribosome is freed to recommence translation, which seems to be the essential function of trans-translation. The polypeptide is SsrA-binding protein (Vesicomyosocius okutanii subsp. Calyptogena okutanii (strain HA)).